The primary structure comprises 88 residues: MFGQRQSMIVYLHSLKHAKILRKYGNIHYISKRLKYAVVYCDMEQIEHMMHKLNKLPFVKKIEQSYRPYLKTEFENSRPDRAKEYDYS.

It belongs to the UPF0298 family.

It localises to the cytoplasm. In Bacillus cereus (strain ATCC 14579 / DSM 31 / CCUG 7414 / JCM 2152 / NBRC 15305 / NCIMB 9373 / NCTC 2599 / NRRL B-3711), this protein is UPF0298 protein BC_3932.